A 420-amino-acid chain; its full sequence is Phosphoglycerate kinase (420 aa).

Residues Val26, Asp27, Tyr28, Asn29, Gln42, Arg43, Ser66, His67, Gly69, Arg70, Leu125, Arg126, His173, and Arg174 each coordinate (2R)-3-phosphoglycerate. Tyr199 carries the phosphotyrosine modification. The residue at position 206 (Ser206) is a Phosphoserine. A calmodulin binding region spans residues 209–228 (KPFLAILGGAKVSDKIKLIE). ADP is bound at residue Gly217. Gly217 lines the CDP pocket. 2 residues coordinate AMP: Ala218 and Lys219. Position 218 (Ala218) interacts with ATP. Ala218 contacts Mg(2+). Residue Asp222 participates in CDP binding. Asp222 contributes to the Mg(2+) binding site. Lys223 contributes to the AMP binding site. Lys223 contacts ATP. Gly241 is a binding site for ADP. Gly241 serves as a coordination point for CDP. AMP contacts are provided by Gly242 and Gly316. ATP is bound by residues Gly242 and Gly316. CDP is bound by residues Gly341 and Phe346. Residue Phe346 coordinates ADP. Glu347 contributes to the AMP binding site. Glu347, Asp378, and Thr379 together coordinate ATP. Asp378 serves as a coordination point for Mg(2+). Ser393 carries the post-translational modification Phosphoserine.

The protein belongs to the phosphoglycerate kinase family. As to quaternary structure, monomer. Interacts with calmodulin in the presence of Ca(2+). The cofactor is Mg(2+).

Its subcellular location is the cytoplasm. The catalysed reaction is (2R)-3-phosphoglycerate + ATP = (2R)-3-phospho-glyceroyl phosphate + ADP. It participates in carbohydrate degradation; glycolysis; pyruvate from D-glyceraldehyde 3-phosphate: step 2/5. The sequence is that of Phosphoglycerate kinase from Dictyostelium discoideum (Social amoeba).